The chain runs to 85 residues: Large ribosomal subunit protein bL27 (85 aa).

Positions methionine 1–leucine 21 are disordered.

It belongs to the bacterial ribosomal protein bL27 family.

The sequence is that of Large ribosomal subunit protein bL27 from Thermus thermophilus (strain ATCC BAA-163 / DSM 7039 / HB27).